Consider the following 375-residue polypeptide: Major DNA-binding protein (375 aa).

This sequence belongs to the herpesviridae DNA-binding protein family.

The protein localises to the host nucleus. Functionally, single-stranded DNA-binding protein required for DNA replication. The protein is Major DNA-binding protein of Equine herpesvirus 1 (strain HVS25A) (EHV-1).